The following is a 204-amino-acid chain: Thymidylate kinase (204 aa).

7 to 14 (GGEGVGKT) is an ATP binding site.

It belongs to the thymidylate kinase family.

The catalysed reaction is dTMP + ATP = dTDP + ADP. Functionally, phosphorylation of dTMP to form dTDP in both de novo and salvage pathways of dTTP synthesis. The polypeptide is Thymidylate kinase (Synechococcus sp. (strain JA-3-3Ab) (Cyanobacteria bacterium Yellowstone A-Prime)).